A 240-amino-acid polypeptide reads, in one-letter code: Lactate utilization protein C (240 aa).

It belongs to the LutC/YkgG family.

In terms of biological role, is involved in L-lactate degradation and allows cells to grow with lactate as the sole carbon source. The polypeptide is Lactate utilization protein C (Bacillus licheniformis (strain ATCC 14580 / DSM 13 / JCM 2505 / CCUG 7422 / NBRC 12200 / NCIMB 9375 / NCTC 10341 / NRRL NRS-1264 / Gibson 46)).